The chain runs to 296 residues: Glycine N-acyltransferase (296 aa).

Lysine 16 carries the post-translational modification N6-acetyllysine; alternate. Lysine 16 is modified (N6-succinyllysine; alternate). Position 113 is an N6-acetyllysine (lysine 113). N6-acetyllysine; alternate occurs at positions 127 and 142. An N6-succinyllysine; alternate mark is found at lysine 127 and lysine 142. Lysine 159 is modified (N6-acetyllysine). Lysine 169 is subject to N6-succinyllysine. N6-acetyllysine; alternate occurs at positions 183 and 256. N6-succinyllysine; alternate occurs at positions 183 and 256. Lysine 267 carries the post-translational modification N6-succinyllysine.

This sequence belongs to the glycine N-acyltransferase family.

The protein localises to the mitochondrion. It carries out the reaction an acyl-CoA + glycine = an N-acylglycine + CoA + H(+). The enzyme catalyses benzoyl-CoA + glycine = N-benzoylglycine + CoA + H(+). In terms of biological role, mitochondrial acyltransferase which transfers an acyl group to the N-terminus of glycine and glutamine, although much less efficiently. Can conjugate a multitude of substrates to form a variety of N-acylglycines, thereby detoxify xenobiotics, such as benzoic acid or salicylic acid, and endogenous organic acids, such as isovaleric acid. This Rattus norvegicus (Rat) protein is Glycine N-acyltransferase (Glyat).